We begin with the raw amino-acid sequence, 450 residues long: Putative serine/threonine-protein kinase R517/R518 (450 aa).

Residues 9-290 (KMTDTVLGKG…WSELFHHYWF (282 aa)) form the Protein kinase domain. Residues 15 to 23 (LGKGGFSEV) and lysine 38 contribute to the ATP site. The active-site Proton acceptor is the aspartate 140.

It belongs to the protein kinase superfamily. Ser/Thr protein kinase family.

The enzyme catalyses L-seryl-[protein] + ATP = O-phospho-L-seryl-[protein] + ADP + H(+). It carries out the reaction L-threonyl-[protein] + ATP = O-phospho-L-threonyl-[protein] + ADP + H(+). This is Putative serine/threonine-protein kinase R517/R518 from Acanthamoeba polyphaga mimivirus (APMV).